Reading from the N-terminus, the 274-residue chain is Large ribosomal subunit protein uL2 (274 aa).

A disordered region spans residues 224 to 274; that stretch reads VAMNPVDHPHGGGEGRTSGGRHPVTPWGIPTKGYKTRKNKRSNKLIVQKRK. Over residues 257-274 the composition is skewed to basic residues; the sequence is YKTRKNKRSNKLIVQKRK.

Belongs to the universal ribosomal protein uL2 family. Part of the 50S ribosomal subunit. Forms a bridge to the 30S subunit in the 70S ribosome.

Functionally, one of the primary rRNA binding proteins. Required for association of the 30S and 50S subunits to form the 70S ribosome, for tRNA binding and peptide bond formation. It has been suggested to have peptidyltransferase activity; this is somewhat controversial. Makes several contacts with the 16S rRNA in the 70S ribosome. The polypeptide is Large ribosomal subunit protein uL2 (Francisella philomiragia subsp. philomiragia (strain ATCC 25017 / CCUG 19701 / FSC 153 / O#319-036)).